Reading from the N-terminus, the 1898-residue chain is Receptor-type tyrosine-protein phosphatase F (1898 aa).

The signal sequence occupies residues M1–G29. At D30–W1254 the chain is on the extracellular side. 3 consecutive Ig-like C2-type domains span residues P33 to S123, P135 to Y224, and P232 to T314. C54 and C107 form a disulfide bridge. A heparin-binding site is contributed by K68–R77. A glycan (N-linked (GlcNAc...) asparagine) is linked at N117. C156 and C207 are joined by a disulfide. N250 and N295 each carry an N-linked (GlcNAc...) asparagine glycan. The cysteines at positions 253 and 298 are disulfide-linked. Fibronectin type-III domains are found at residues P321–Q411, P416–G510, Q514–S604, P609–D706, P711–A810, V811–D904, F909–V1001, and F1005–D1089. Positions G693–P712 are disordered. A glycan (N-linked (GlcNAc...) asparagine) is linked at N721. N-linked (GlcNAc...) asparagine glycans are attached at residues N941, N957, and N960. The chain crosses the membrane as a helical span at residues V1255–F1275. Over K1276–T1898 the chain is Cytoplasmic. S1296 is subject to Phosphoserine. Tyrosine-protein phosphatase domains follow at residues F1343 to A1598 and M1630 to Y1889. Substrate is bound by residues D1507, C1539–R1545, and Q1583. C1539 serves as the catalytic Phosphocysteine intermediate. C1830 (phosphocysteine intermediate) is an active-site residue.

Belongs to the protein-tyrosine phosphatase family. Receptor class 2A subfamily. Interacts with GRIP1. Interacts with PPFIA1, PPFIA2 and PPFIA3. Interacts with PTPRF. In terms of tissue distribution, expressed in the cell of the T lineage but not in cells of any other hemopoietic lineage.

It is found in the membrane. It catalyses the reaction O-phospho-L-tyrosyl-[protein] + H2O = L-tyrosyl-[protein] + phosphate. Possible cell adhesion receptor. It possesses an intrinsic protein tyrosine phosphatase activity (PTPase) and dephosphorylates EPHA2 regulating its activity. This chain is Receptor-type tyrosine-protein phosphatase F (Ptprf), found in Mus musculus (Mouse).